The primary structure comprises 140 residues: Large ribosomal subunit protein uL11 (140 aa).

The protein belongs to the universal ribosomal protein uL11 family. Part of the ribosomal stalk of the 50S ribosomal subunit. Interacts with L10 and the large rRNA to form the base of the stalk. L10 forms an elongated spine to which L12 dimers bind in a sequential fashion forming a multimeric L10(L12)X complex. Post-translationally, one or more lysine residues are methylated.

In terms of biological role, forms part of the ribosomal stalk which helps the ribosome interact with GTP-bound translation factors. The protein is Large ribosomal subunit protein uL11 of Gemmatimonas aurantiaca (strain DSM 14586 / JCM 11422 / NBRC 100505 / T-27).